A 452-amino-acid chain; its full sequence is Bifunctional protein GlmU (452 aa).

The interval 1 to 226 (MAFSVVVLAA…AVEVEGVNNR (226 aa)) is pyrophosphorylase. UDP-N-acetyl-alpha-D-glucosamine-binding positions include 8-11 (LAAG), lysine 22, glutamine 73, and 78-79 (GT). Aspartate 102 lines the Mg(2+) pocket. The UDP-N-acetyl-alpha-D-glucosamine site is built by glycine 137, glutamate 151, asparagine 166, and asparagine 224. Asparagine 224 provides a ligand contact to Mg(2+). Positions 227–247 (LQLANLERALQNRQADELMTN) are linker. Residues 248 to 452 (GVTLLDPSRF…IPNWPRPTKK (205 aa)) are N-acetyltransferase. UDP-N-acetyl-alpha-D-glucosamine is bound by residues arginine 330 and lysine 348. Histidine 360 functions as the Proton acceptor in the catalytic mechanism. Residues tyrosine 363 and asparagine 374 each coordinate UDP-N-acetyl-alpha-D-glucosamine. Residues alanine 377, 383–384 (NY), serine 402, alanine 420, and arginine 437 each bind acetyl-CoA.

This sequence in the N-terminal section; belongs to the N-acetylglucosamine-1-phosphate uridyltransferase family. The protein in the C-terminal section; belongs to the transferase hexapeptide repeat family. As to quaternary structure, homotrimer. Mg(2+) is required as a cofactor.

It localises to the cytoplasm. It catalyses the reaction alpha-D-glucosamine 1-phosphate + acetyl-CoA = N-acetyl-alpha-D-glucosamine 1-phosphate + CoA + H(+). The catalysed reaction is N-acetyl-alpha-D-glucosamine 1-phosphate + UTP + H(+) = UDP-N-acetyl-alpha-D-glucosamine + diphosphate. The protein operates within nucleotide-sugar biosynthesis; UDP-N-acetyl-alpha-D-glucosamine biosynthesis; N-acetyl-alpha-D-glucosamine 1-phosphate from alpha-D-glucosamine 6-phosphate (route II): step 2/2. Its pathway is nucleotide-sugar biosynthesis; UDP-N-acetyl-alpha-D-glucosamine biosynthesis; UDP-N-acetyl-alpha-D-glucosamine from N-acetyl-alpha-D-glucosamine 1-phosphate: step 1/1. It functions in the pathway bacterial outer membrane biogenesis; LPS lipid A biosynthesis. In terms of biological role, catalyzes the last two sequential reactions in the de novo biosynthetic pathway for UDP-N-acetylglucosamine (UDP-GlcNAc). The C-terminal domain catalyzes the transfer of acetyl group from acetyl coenzyme A to glucosamine-1-phosphate (GlcN-1-P) to produce N-acetylglucosamine-1-phosphate (GlcNAc-1-P), which is converted into UDP-GlcNAc by the transfer of uridine 5-monophosphate (from uridine 5-triphosphate), a reaction catalyzed by the N-terminal domain. The sequence is that of Bifunctional protein GlmU from Alteromonas mediterranea (strain DSM 17117 / CIP 110805 / LMG 28347 / Deep ecotype).